The sequence spans 337 residues: GTPase Obg (337 aa).

The region spanning 4–162 (SNFVDYAKIH…RQIVFQLKLL (159 aa)) is the Obg domain. One can recognise an OBG-type G domain in the interval 163-329 (ADVGLVGFPN…LKDLLWEKLR (167 aa)). Residues 169-176 (GFPNTGKS), 194-198 (FTTLE), 216-219 (DIPG), 283-286 (SKSD), and 310-312 (SSF) contribute to the GTP site. Residues serine 176 and threonine 196 each contribute to the Mg(2+) site.

Belongs to the TRAFAC class OBG-HflX-like GTPase superfamily. OBG GTPase family. In terms of assembly, monomer. The cofactor is Mg(2+).

The protein localises to the cytoplasm. In terms of biological role, an essential GTPase which binds GTP, GDP and possibly (p)ppGpp with moderate affinity, with high nucleotide exchange rates and a fairly low GTP hydrolysis rate. Plays a role in control of the cell cycle, stress response, ribosome biogenesis and in those bacteria that undergo differentiation, in morphogenesis control. The polypeptide is GTPase Obg (Azobacteroides pseudotrichonymphae genomovar. CFP2).